The primary structure comprises 254 residues: Glutamate racemase (254 aa).

Residues 7–8 (DS) and 39–40 (YG) each bind substrate. The active-site Proton donor/acceptor is the Cys-70. A substrate-binding site is contributed by 71–72 (NT). The active-site Proton donor/acceptor is the Cys-178. 179 to 180 (TH) contributes to the substrate binding site.

It belongs to the aspartate/glutamate racemases family.

It catalyses the reaction L-glutamate = D-glutamate. Its pathway is cell wall biogenesis; peptidoglycan biosynthesis. Provides the (R)-glutamate required for cell wall biosynthesis. The polypeptide is Glutamate racemase (Aquifex aeolicus (strain VF5)).